Reading from the N-terminus, the 319-residue chain is F-box only protein 8 (319 aa).

Residues 68–111 enclose the F-box domain; that stretch reads FINLEMLPPELSFTILSYLNATDLCLASCVWQDLANDELLWQGL. Residues 146-276 form the SEC7 domain; that stretch reads FNANPEEGVS…LILLSIDLTS (131 aa).

High expression in brain, heart, kidney, liver, lung, skeletal muscle, testis, and day-7 embryos.

Its function is as follows. May promote guanine-nucleotide exchange on an ARF. Promotes the activation of ARF through replacement of GDP with GTP (Potential). The chain is F-box only protein 8 (Fbxo8) from Mus musculus (Mouse).